A 597-amino-acid polypeptide reads, in one-letter code: Aspartate--tRNA ligase (597 aa).

E180 contributes to the L-aspartate binding site. Residues 204-207 (QLFK) form an aspartate region. R226 is a binding site for L-aspartate. ATP contacts are provided by residues 226–228 (RDE) and Q235. Residue H454 coordinates L-aspartate. E488 contributes to the ATP binding site. R495 lines the L-aspartate pocket. 540 to 543 (GLDR) contacts ATP.

This sequence belongs to the class-II aminoacyl-tRNA synthetase family. Type 1 subfamily. As to quaternary structure, homodimer.

It localises to the cytoplasm. The catalysed reaction is tRNA(Asp) + L-aspartate + ATP = L-aspartyl-tRNA(Asp) + AMP + diphosphate. Functionally, catalyzes the attachment of L-aspartate to tRNA(Asp) in a two-step reaction: L-aspartate is first activated by ATP to form Asp-AMP and then transferred to the acceptor end of tRNA(Asp). The protein is Aspartate--tRNA ligase of Clostridium perfringens (strain SM101 / Type A).